A 413-amino-acid chain; its full sequence is Na(+)-translocating NADH-quinone reductase subunit B (413 aa).

3 helical membrane-spanning segments follow: residues 56 to 76, 123 to 143, and 169 to 189; these read MMILVWFAVFPAMFWGMYNVG, LLGAAYFLPIYAVVFLVGGFW, and IVPPTLPLWQAALGISFGVVI. At Thr236 the chain carries FMN phosphoryl threonine. 5 helical membrane-spanning segments follow: residues 270–290, 297–317, 322–342, 358–378, and 381–401; these read GSIGEVSTLMILIGGAIIIFG, IVAGVMIGMIATAYLFNWIGS, LFAMPWYWHLVLGGFAFGMIF, WWYGGLIGVMCILIRVANPAY, and GMMLAILFANLFAPLFDYVVV.

The protein belongs to the NqrB/RnfD family. In terms of assembly, composed of six subunits; NqrA, NqrB, NqrC, NqrD, NqrE and NqrF. It depends on FMN as a cofactor.

Its subcellular location is the cell inner membrane. The catalysed reaction is a ubiquinone + n Na(+)(in) + NADH + H(+) = a ubiquinol + n Na(+)(out) + NAD(+). Functionally, NQR complex catalyzes the reduction of ubiquinone-1 to ubiquinol by two successive reactions, coupled with the transport of Na(+) ions from the cytoplasm to the periplasm. NqrA to NqrE are probably involved in the second step, the conversion of ubisemiquinone to ubiquinol. The chain is Na(+)-translocating NADH-quinone reductase subunit B from Yersinia pestis.